The sequence spans 294 residues: tRNA dimethylallyltransferase (294 aa).

9–16 (GPTASGKS) serves as a coordination point for ATP. 11–16 (TASGKS) is a substrate binding site. The interval 155-159 (QRVIR) is interaction with substrate tRNA.

The protein belongs to the IPP transferase family. As to quaternary structure, monomer. The cofactor is Mg(2+).

The catalysed reaction is adenosine(37) in tRNA + dimethylallyl diphosphate = N(6)-dimethylallyladenosine(37) in tRNA + diphosphate. Its function is as follows. Catalyzes the transfer of a dimethylallyl group onto the adenine at position 37 in tRNAs that read codons beginning with uridine, leading to the formation of N6-(dimethylallyl)adenosine (i(6)A). This is tRNA dimethylallyltransferase from Leuconostoc citreum (strain KM20).